Consider the following 640-residue polypeptide: ATP-dependent rRNA helicase spb4 (640 aa).

The Q motif signature appears at 14-42 (WDAVTPALSEWVLEAMSSMGFTRMTPVQA). In terms of domain architecture, Helicase ATP-binding spans 45-249 (IPLFMAHKDV…RVGLRNPVKV (205 aa)). 58 to 65 (AVTGSGKT) lines the ATP pocket. The short motif at 197 to 200 (DEAD) is the DEAD box element. Residues 283–437 (ALKRIVSSVQ…SISFSDADAA (155 aa)) form the Helicase C-terminal domain. A coiled-coil region spans residues 521-629 (AYKDKQREKR…VAKAAGAKAD (109 aa)). 2 disordered regions span residues 531 to 593 (RKEL…EEEK) and 607 to 640 (RKKNEEERRLRRAVAKAAGAKADGDDEEEFQGFD). Positions 577 to 593 (KSKQEKARWEKMTEEEK) are enriched in basic and acidic residues. Positions 630–640 (GDDEEEFQGFD) are enriched in acidic residues.

Belongs to the DEAD box helicase family. DDX55/SPB4 subfamily. In terms of assembly, component of pre-60S ribosomal complexes.

It localises to the nucleus. Its subcellular location is the nucleolus. The enzyme catalyses ATP + H2O = ADP + phosphate + H(+). In terms of biological role, ATP-binding RNA helicase involved in the biogenesis of 60S ribosomal subunits. Binds 90S pre-ribosomal particles and dissociates from pre-60S ribosomal particles after processing of 27SB pre-rRNA. Required for the normal formation of 18S rRNA through the processing of pre-rRNAs at sites A0, A1 and A2, and the normal formation of 25S and 5.8S rRNAs through the processing of pre-rRNAs at sites C1 and C2. The sequence is that of ATP-dependent rRNA helicase spb4 from Aspergillus fumigatus (strain ATCC MYA-4609 / CBS 101355 / FGSC A1100 / Af293) (Neosartorya fumigata).